A 239-amino-acid chain; its full sequence is Ribonuclease HII (239 aa).

Residues 18–231 (KIIVGLDEAG…SKNLLKEIEE (214 aa)) form the RNase H type-2 domain. Positions 24, 25, and 125 each coordinate a divalent metal cation.

This sequence belongs to the RNase HII family. Mn(2+) serves as cofactor. Mg(2+) is required as a cofactor.

Its subcellular location is the cytoplasm. It catalyses the reaction Endonucleolytic cleavage to 5'-phosphomonoester.. In terms of biological role, endonuclease that specifically degrades the RNA of RNA-DNA hybrids. The polypeptide is Ribonuclease HII (Methanococcus maripaludis (strain C5 / ATCC BAA-1333)).